We begin with the raw amino-acid sequence, 664 residues long: Acetolactate synthase 2, chloroplastic (664 aa).

Positions 1–34 are enriched in low complexity; that stretch reads MAAAAAAPSPSFSKTLSSSSSKSSTLLPRSTFPF. Positions 1 to 51 are disordered; it reads MAAAAAAPSPSFSKTLSSSSSKSSTLLPRSTFPFPHHPHKTTPPPLHLTPT. Residues 1 to 91 constitute a chloroplast transit peptide; that stretch reads MAAAAAAPSP…VSRFAPDEPR (91 aa). A thiamine diphosphate-binding site is contributed by glutamate 138. The cysteines at positions 158 and 304 are disulfide-linked. FAD contacts are provided by residues arginine 240, 346–367, and 389–408; these read HGTV…FGVR and DIDS…ICAD. Residues 481–561 are thiamine pyrophosphate binding; that stretch reads QHQMWAAQYY…VKIMLLNNQH (81 aa). Aspartate 532 and asparagine 559 together coordinate Mg(2+).

This sequence belongs to the TPP enzyme family. It depends on Mg(2+) as a cofactor. Thiamine diphosphate is required as a cofactor.

It localises to the plastid. It is found in the chloroplast. It catalyses the reaction 2 pyruvate + H(+) = (2S)-2-acetolactate + CO2. It participates in amino-acid biosynthesis; L-isoleucine biosynthesis; L-isoleucine from 2-oxobutanoate: step 1/4. Its pathway is amino-acid biosynthesis; L-valine biosynthesis; L-valine from pyruvate: step 1/4. The sequence is that of Acetolactate synthase 2, chloroplastic (ALS SURB) from Nicotiana tabacum (Common tobacco).